The primary structure comprises 114 residues: Fluoride-specific ion channel FluC 1 (114 aa).

Transmembrane regions (helical) follow at residues 23-43 (ATLT…SYVF), 52-72 (LSTA…TLSV), and 84-104 (FLAM…SHLG). Na(+)-binding residues include Gly62 and Thr65.

The protein belongs to the fluoride channel Fluc/FEX (TC 1.A.43) family.

It localises to the cell membrane. The enzyme catalyses fluoride(in) = fluoride(out). Its activity is regulated as follows. Na(+) is not transported, but it plays an essential structural role and its presence is essential for fluoride channel function. In terms of biological role, fluoride-specific ion channel. Important for reducing fluoride concentration in the cell, thus reducing its toxicity. This chain is Fluoride-specific ion channel FluC 1, found in Desulfitobacterium hafniense (strain Y51).